The following is a 137-amino-acid chain: Protein Turandot X (137 aa).

The signal sequence occupies residues 1–24 (MRVPVFQLSCLLGLIVCLLCSVKA).

The protein belongs to the Turandot family.

The protein localises to the secreted. Functionally, a humoral factor that may play a role in stress tolerance. This is Protein Turandot X from Drosophila pseudoobscura pseudoobscura (Fruit fly).